We begin with the raw amino-acid sequence, 544 residues long: Cytochrome P450 82A1 (544 aa).

A heme-binding site is contributed by Cys-481.

The protein belongs to the cytochrome P450 family. Heme serves as cofactor.

It is found in the membrane. In Pisum sativum (Garden pea), this protein is Cytochrome P450 82A1 (CYP82A1).